The chain runs to 401 residues: Argininosuccinate synthase (401 aa).

ATP contacts are provided by residues 10-18 (AYSGGVDTS) and Ala-38. Position 89 (Tyr-89) interacts with L-citrulline. Gly-119 lines the ATP pocket. Positions 121, 125, and 126 each coordinate L-aspartate. Asn-125 contacts L-citrulline. The L-citrulline site is built by Arg-129, Ser-177, Ser-186, Glu-262, and Tyr-274.

This sequence belongs to the argininosuccinate synthase family. Type 1 subfamily. In terms of assembly, homotetramer.

It is found in the cytoplasm. The enzyme catalyses L-citrulline + L-aspartate + ATP = 2-(N(omega)-L-arginino)succinate + AMP + diphosphate + H(+). The protein operates within amino-acid biosynthesis; L-arginine biosynthesis; L-arginine from L-ornithine and carbamoyl phosphate: step 2/3. This chain is Argininosuccinate synthase, found in Prochlorococcus marinus (strain MIT 9303).